The chain runs to 356 residues: Guanine nucleotide-binding protein alpha-2 subunit (356 aa).

The tract at residues 1 to 25 (MGLCQSEEEKVGSQKSRAIDKEIKQ) is disordered. G2 carries N-myristoyl glycine lipidation. C4 carries the S-palmitoyl cysteine lipid modification. Over residues 7–25 (EEEKVGSQKSRAIDKEIKQ) the composition is skewed to basic and acidic residues. A G-alpha domain is found at 14–338 (QKSRAIDKEI…TDTNQVQKIL (325 aa)). The segment at 17-30 (RAIDKEIKQNQSND) is G1 motif. Q25, Q27, S28, N29, D30, V135, E160, A166, V188, E254, S255, C257, and F310 together coordinate GTP. Mg(2+) is bound at residue N29. The segment at 158-166 (FFENLDRIA) is G2 motif. A166 lines the Mg(2+) pocket. The tract at residues 181-190 (RTKTTGIVEV) is G3 motif. The interval 250 to 257 (MRLFESIC) is G4 motif. The tract at residues 308–313 (QKFEAL) is G5 motif.

The protein belongs to the G-alpha family. G(q) subfamily. G proteins are composed of 3 units; alpha, beta and gamma. The alpha chain contains the guanine nucleotide binding site. It depends on Mg(2+) as a cofactor.

Its function is as follows. Guanine nucleotide-binding proteins (G proteins) are involved as modulators or transducers in various transmembrane signaling systems. Involved in behavioral responses to P.aeruginosa by controlling the expression of daf-7, a member of the TGF-beta family, in ASJ sensory neurons. This chain is Guanine nucleotide-binding protein alpha-2 subunit (gpa-2), found in Caenorhabditis briggsae.